We begin with the raw amino-acid sequence, 426 residues long: Cdc25-like protein phosphatase twine (426 aa).

The disordered stretch occupies residues 1–27; that stretch reads MASKRLMLDVEEEDDESGACGQENFDP. A Rhodanese domain is found at 265 to 371; it reads SQGGYEIIDC…FFGLYSQLCQ (107 aa). Cysteine 318 is a catalytic residue.

Belongs to the MPI phosphatase family. As to expression, expressed in developing male and female germ cells.

The enzyme catalyses O-phospho-L-tyrosyl-[protein] + H2O = L-tyrosyl-[protein] + phosphate. Its function is as follows. Required during meiosis. Regulates the transition from the extended G2 phase to the onset of the first meiotic division. The sequence is that of Cdc25-like protein phosphatase twine (twe) from Drosophila melanogaster (Fruit fly).